Reading from the N-terminus, the 296-residue chain is ATP synthase gamma chain (296 aa).

It belongs to the ATPase gamma chain family. In terms of assembly, F-type ATPases have 2 components, CF(1) - the catalytic core - and CF(0) - the membrane proton channel. CF(1) has five subunits: alpha(3), beta(3), gamma(1), delta(1), epsilon(1). CF(0) has three main subunits: a, b and c.

The protein resides in the cell membrane. Produces ATP from ADP in the presence of a proton gradient across the membrane. The gamma chain is believed to be important in regulating ATPase activity and the flow of protons through the CF(0) complex. The polypeptide is ATP synthase gamma chain (Pseudarthrobacter chlorophenolicus (strain ATCC 700700 / DSM 12829 / CIP 107037 / JCM 12360 / KCTC 9906 / NCIMB 13794 / A6) (Arthrobacter chlorophenolicus)).